A 373-amino-acid polypeptide reads, in one-letter code: Filamin-binding LIM protein 1 (373 aa).

The segment at 1-70 (MASKPEKRVA…SPWTTPGRAA (70 aa)) is filamin-binding. Disordered regions lie at residues 41 to 119 (RPWE…PSEE) and 135 to 176 (QLHL…PVEK). Positions 104-114 (LPPPPPPPPVL) are enriched in pro residues. LIM zinc-binding domains are found at residues 181 to 242 (DICA…TLER), 243 to 300 (CGKC…RKFA), and 301 to 370 (PVCS…RSAA). An FERMT2-binding region spans residues 276 to 373 (IGDESFALGS…HVKRSAAGCC (98 aa)).

Interacts with NKX2-5. Isoform 1 and isoform 3 interact with FERMT2, FLNA, FLNB and FLNC. Isoform 2 interacts with FLNB. As to expression, isoform 1 and isoform 3 are expressed in heart, kidney, lung, pancreas, placenta and platelets. Isoform 2 is expressed in brain, heart, kidney, lung, pancreas, placenta, skeletal muscle and platelets.

The protein resides in the cell junction. Its subcellular location is the focal adhesion. It localises to the cytoplasm. It is found in the cytoskeleton. The protein localises to the stress fiber. Functionally, serves as an anchoring site for cell-ECM adhesion proteins and filamin-containing actin filaments. Is implicated in cell shape modulation (spreading) and motility. May participate in the regulation of filamin-mediated cross-linking and stabilization of actin filaments. May also regulate the assembly of filamin-containing signaling complexes that control actin assembly. Promotes dissociation of FLNA from ITGB3 and ITGB7. Promotes activation of integrins and regulates integrin-mediated cell-cell adhesion. This chain is Filamin-binding LIM protein 1 (FBLIM1), found in Homo sapiens (Human).